The following is a 128-amino-acid chain: Large ribosomal subunit protein bL12 (128 aa).

It belongs to the bacterial ribosomal protein bL12 family. Homodimer. Part of the ribosomal stalk of the 50S ribosomal subunit. Forms a multimeric L10(L12)X complex, where L10 forms an elongated spine to which 2 to 4 L12 dimers bind in a sequential fashion. Binds GTP-bound translation factors.

Forms part of the ribosomal stalk which helps the ribosome interact with GTP-bound translation factors. Is thus essential for accurate translation. The chain is Large ribosomal subunit protein bL12 from Brachyspira hyodysenteriae (strain ATCC 49526 / WA1).